The chain runs to 249 residues: MFGLKAKSTKKVFGGIPKHIGIIMDGNGRWAKKRLKPRVFGHKAGMDALQEVTITASELGVKVLTVYAFSTENWSRPQDEVSFIMNLPVTFFDKYVPVLHENNVKIQMIGETSRLPEDTLAALNAAIDKTKRNTGLILNFALNYGGRAEITSAVRFIAQDVLDAKLNPGDITEDLIANYLMTDHLPYLYRDPDLIIRTSGELRLSNFLPWQSAYSEFYFTPVLWPDFKKAELLKAIADYNHRQRRFGKV.

Asp25 is a catalytic residue. A Mg(2+)-binding site is contributed by Asp25. Residues 26-29, Trp30, Arg38, His42, and 70-72 each bind substrate; these read GNGR and STE. The Proton acceptor role is filled by Asn73. Residues Trp74, Arg76, Arg197, and 203-205 each bind substrate; that span reads RLS. Glu216 serves as a coordination point for Mg(2+).

The protein belongs to the UPP synthase family. In terms of assembly, homodimer. The cofactor is Mg(2+).

Functionally, catalyzes the condensation of isopentenyl diphosphate (IPP) with allylic pyrophosphates generating different type of terpenoids. This is Isoprenyl transferase from Streptococcus pyogenes serotype M3 (strain ATCC BAA-595 / MGAS315).